Reading from the N-terminus, the 344-residue chain is Meiotic recombination protein DMC1 homolog A (344 aa).

Residue 133 to 140 participates in ATP binding; it reads GEFRSGKT. Arg235 serves as a coordination point for dsDNA. Arg235, Phe238, Arg241, Arg247, and Arg315 together coordinate ssDNA. Residues Arg241 and Arg247 each coordinate dsDNA.

This sequence belongs to the RecA family. DMC1 subfamily. In terms of tissue distribution, expressed in meiotic young panicles.

Its subcellular location is the nucleus. Its function is as follows. Recombinase that may participate in meiotic recombination, specifically in homologous strand assimilation, which is required for the resolution of meiotic double-strand breaks. Exhibits DNA-dependent ATPase activity when bound to single-stranded DNA (ssDNA). Mediates renaturation of homologous complementary strands as well as assimilation of single strands into homologous supercoiled duplexes leading to D-loop formation. Binds circular single-stranded DNA (ssDNA) and circular double-stranded DNA (dsDNA) in vitro. Catalyzes DNA homologous renaturation and DNA strand exchange. The rates of these activities are dependent on the state of ATP hydrolysis. Forms helical filaments along ssDNA and dsDNA, and promotes strand exchange between ssDNA and dsDNA with long DNA substrates of several thousand base pairs. The presence of the replication protein A is not required for this activity. Seems to be required for homologous pairing and subsequent chromosome segregation during male meiosis. May be not directly required for homologous pairing during male meiosis. Required for synaptonemal complex assembly and crossover formation. Functions redundantly with DMC1B. In Oryza sativa subsp. japonica (Rice), this protein is Meiotic recombination protein DMC1 homolog A.